Consider the following 121-residue polypeptide: Small ribosomal subunit protein uS11 (121 aa).

This sequence belongs to the universal ribosomal protein uS11 family. As to quaternary structure, part of the 30S ribosomal subunit. Interacts with proteins S7 and S18. Binds to IF-3.

Located on the platform of the 30S subunit, it bridges several disparate RNA helices of the 16S rRNA. Forms part of the Shine-Dalgarno cleft in the 70S ribosome. This chain is Small ribosomal subunit protein uS11, found in Ureaplasma parvum serovar 3 (strain ATCC 27815 / 27 / NCTC 11736).